Here is a 393-residue protein sequence, read N- to C-terminus: Methylthioribose kinase (393 aa).

ATP contacts are provided by residues Asn38, Lys53, and 107 to 109 (EDL). Asp225 is a binding site for substrate. 242 to 244 (DPE) contributes to the ATP binding site. Arg332 serves as a coordination point for substrate.

The protein belongs to the methylthioribose kinase family. As to quaternary structure, homodimer.

It catalyses the reaction 5-(methylsulfanyl)-D-ribose + ATP = 5-(methylsulfanyl)-alpha-D-ribose 1-phosphate + ADP + H(+). It participates in amino-acid biosynthesis; L-methionine biosynthesis via salvage pathway; S-methyl-5-thio-alpha-D-ribose 1-phosphate from S-methyl-5'-thioadenosine (hydrolase route): step 2/2. Catalyzes the phosphorylation of methylthioribose into methylthioribose-1-phosphate. The protein is Methylthioribose kinase of Bacillus cereus (strain 03BB102).